Here is a 338-residue protein sequence, read N- to C-terminus: Lipoate-protein ligase A (338 aa).

In terms of domain architecture, BPL/LPL catalytic spans Pro29–Val216. ATP contacts are provided by residues Arg71, Gly76 to Phe79, and Lys134. Residue Lys134 participates in (R)-lipoate binding.

The protein belongs to the LplA family. As to quaternary structure, monomer.

It localises to the cytoplasm. The catalysed reaction is L-lysyl-[lipoyl-carrier protein] + (R)-lipoate + ATP = N(6)-[(R)-lipoyl]-L-lysyl-[lipoyl-carrier protein] + AMP + diphosphate + H(+). The protein operates within protein modification; protein lipoylation via exogenous pathway; protein N(6)-(lipoyl)lysine from lipoate: step 1/2. It participates in protein modification; protein lipoylation via exogenous pathway; protein N(6)-(lipoyl)lysine from lipoate: step 2/2. Functionally, catalyzes both the ATP-dependent activation of exogenously supplied lipoate to lipoyl-AMP and the transfer of the activated lipoyl onto the lipoyl domains of lipoate-dependent enzymes. The polypeptide is Lipoate-protein ligase A (Escherichia coli O139:H28 (strain E24377A / ETEC)).